The sequence spans 277 residues: Large ribosomal subunit protein uL2 (277 aa).

Disordered regions lie at residues 36–58 and 219–277; these read PLHK…GGGH and TVRG…RKNK. The segment covering 258-277 has biased composition (basic residues); it reads KTRKKKNKSDKFIVRRRKNK.

This sequence belongs to the universal ribosomal protein uL2 family. Part of the 50S ribosomal subunit. Forms a bridge to the 30S subunit in the 70S ribosome.

One of the primary rRNA binding proteins. Required for association of the 30S and 50S subunits to form the 70S ribosome, for tRNA binding and peptide bond formation. It has been suggested to have peptidyltransferase activity; this is somewhat controversial. Makes several contacts with the 16S rRNA in the 70S ribosome. The polypeptide is Large ribosomal subunit protein uL2 (Bacillus velezensis (strain DSM 23117 / BGSC 10A6 / LMG 26770 / FZB42) (Bacillus amyloliquefaciens subsp. plantarum)).